Reading from the N-terminus, the 560-residue chain is Arginine--tRNA ligase (560 aa).

Residues 121-131 (PNIAKPFSMGH) carry the 'HIGH' region motif.

The protein belongs to the class-I aminoacyl-tRNA synthetase family. Monomer.

The protein resides in the cytoplasm. The catalysed reaction is tRNA(Arg) + L-arginine + ATP = L-arginyl-tRNA(Arg) + AMP + diphosphate. This chain is Arginine--tRNA ligase, found in Exiguobacterium sp. (strain ATCC BAA-1283 / AT1b).